The sequence spans 220 residues: Octanoyltransferase (220 aa).

The 182-residue stretch at 27-208 (PGTADEIWLC…QLARAHGHAV (182 aa)) folds into the BPL/LPL catalytic domain. Residues 66–73 (RGGQVTYH), 139–141 (ALG), and 152–154 (GLA) contribute to the substrate site. The Acyl-thioester intermediate role is filled by C170.

This sequence belongs to the LipB family.

It localises to the cytoplasm. It carries out the reaction octanoyl-[ACP] + L-lysyl-[protein] = N(6)-octanoyl-L-lysyl-[protein] + holo-[ACP] + H(+). The protein operates within protein modification; protein lipoylation via endogenous pathway; protein N(6)-(lipoyl)lysine from octanoyl-[acyl-carrier-protein]: step 1/2. Functionally, catalyzes the transfer of endogenously produced octanoic acid from octanoyl-acyl-carrier-protein onto the lipoyl domains of lipoate-dependent enzymes. Lipoyl-ACP can also act as a substrate although octanoyl-ACP is likely to be the physiological substrate. This Bordetella parapertussis (strain 12822 / ATCC BAA-587 / NCTC 13253) protein is Octanoyltransferase.